Reading from the N-terminus, the 220-residue chain is LHFPL tetraspan subfamily member 1 protein (220 aa).

An N-terminal signal peptide occupies residues 1–20; it reads MRNSLTMVGTFWAFLSLVTA. 2 consecutive transmembrane segments (helical) span residues 86–106 and 122–142; these read VVTG…VLGC and AAQF…PLGW. A glycan (N-linked (GlcNAc...) asparagine) is linked at asparagine 153. A helical membrane pass occupies residues 165–185; that stretch reads LGWAYYCAGGGAAAAMLICTW.

Belongs to the LHFP family. Widely expressed. Strongly expressed in vagina and ovary. Weakly expressed in spleen, kidney, thymus, testis, brain, lung, intestine and uterus.

The protein resides in the membrane. The protein is LHFPL tetraspan subfamily member 1 protein of Mus musculus (Mouse).